The primary structure comprises 138 residues: Large ribosomal subunit protein bL19 (138 aa).

It belongs to the bacterial ribosomal protein bL19 family.

In terms of biological role, this protein is located at the 30S-50S ribosomal subunit interface and may play a role in the structure and function of the aminoacyl-tRNA binding site. The protein is Large ribosomal subunit protein bL19 of Rickettsia akari (strain Hartford).